Reading from the N-terminus, the 559-residue chain is Methionine--tRNA ligase (559 aa).

Positions 10 to 20 (PYINAVPHLGT) match the 'HIGH' region motif. Zn(2+) contacts are provided by cysteine 141, cysteine 144, cysteine 154, and cysteine 157. Positions 331–335 (KFSKS) match the 'KMSKS' region motif. Lysine 334 contributes to the ATP binding site.

The protein belongs to the class-I aminoacyl-tRNA synthetase family. MetG type 1 subfamily. Requires Zn(2+) as cofactor.

The protein localises to the cytoplasm. The catalysed reaction is tRNA(Met) + L-methionine + ATP = L-methionyl-tRNA(Met) + AMP + diphosphate. Is required not only for elongation of protein synthesis but also for the initiation of all mRNA translation through initiator tRNA(fMet) aminoacylation. In Korarchaeum cryptofilum (strain OPF8), this protein is Methionine--tRNA ligase.